Consider the following 282-residue polypeptide: sn-glycerol-3-phosphate transport system permease protein UgpE (282 aa).

Transmembrane regions (helical) follow at residues 14–34, 86–106, 112–132, 146–168, 201–221, and 248–268; these read LILI…FVAS, MAIA…IVFF, MFFF…RILP, YAGL…QFFL, IAAL…WPLL, and WNYV…VVVL. The 192-residue stretch at 78 to 269 folds into the ABC transmembrane type-1 domain; that stretch reads LWNSFVVAMA…IPLILVVVLM (192 aa).

It belongs to the binding-protein-dependent transport system permease family. The complex is composed of two ATP-binding proteins (UgpC), two transmembrane proteins (UgpA and UgpE) and a solute-binding protein (UgpB).

The protein localises to the cell inner membrane. In terms of biological role, part of the ABC transporter complex UgpBAEC involved in sn-glycerol-3-phosphate (G3P) import. Probably responsible for the translocation of the substrate across the membrane. The protein is sn-glycerol-3-phosphate transport system permease protein UgpE (ugpE) of Brucella abortus (strain 2308).